The chain runs to 575 residues: Sodium/hydrogen exchanger 8 (575 aa).

11 helical membrane-spanning segments follow: residues 54 to 74 (MTIFFSLLVLAICIILVHLLI), 78 to 98 (LHFLPESVAVVSLGILMGAVI), 117 to 137 (PNMFFLLLLPPIIFESGYSLH), 150 to 170 (LFAVFGTAISAFVVGGGIYFL), 185 to 205 (FAFGSLISAVDPVATIAIFNA), 255 to 275 (LGYFLKMFFGSAALGTLTGLI), 305 to 325 (GLAEGISLSGIMAILFSGIVM), 348 to 368 (VAFLCETCVFAFLGLSIFSFP), 373 to 393 (ISFVIWCIVLVLFGRAVNIFP), 411 to 431 (MFIMWFSGLRGAIPYALSLHL), and 445 to 465 (TTIIIVLFTILLLGGSTMPLI). T504 is modified (phosphothreonine). A phosphoserine mark is found at S565 and S567.

It belongs to the monovalent cation:proton antiporter 1 (CPA1) transporter (TC 2.A.36) family. Intestine and kidneys.

It is found in the golgi apparatus membrane. The protein localises to the golgi apparatus. Its subcellular location is the trans-Golgi network membrane. The protein resides in the endosome. It localises to the multivesicular body membrane. It is found in the apical cell membrane. The protein localises to the cytoplasmic vesicle. Its subcellular location is the secretory vesicle. The protein resides in the acrosome. It catalyses the reaction Na(+)(in) + H(+)(out) = Na(+)(out) + H(+)(in). Its activity is regulated as follows. Expression and activity are regulated by acid media by increasing the rate of trafficking to the apical membrane. Inhibited by HOE694 and S3226. Functionally, na(+)/H(+) antiporter. Mediates the electoneutral exchange of intracellular H(+) ions for extracellular Na(+) in 1:1 stoichiometry. Acts as an Na(+)/H(+) exchanger in the trans-Golgi. Contributes to the regulation of pH regulation of Golgi apparatus, and consequently, in protein trafficking and endosomal morphology. In germ cells, plays a crucial role in acrosome biogenesis and sperm development, probably by playing a role in the fusion of the Golgi-derived vesicles that form the acrosomal cap. Can also be active at the cell surface of specialized cells. In the small intestine, at the cell membrane, plays a major physiological role in transepithelial absorption of Na(+) and regulates intracellular pH homeostasis of intestinal epithelial cells. Acts as an important regulator of mucosal integrity in the intestine and in the stomach, could mediate the pH fluctuation necessary for mucin exocytosis or assist membrane trafficking of other proteins. Plays a role in photoreceptor survival and in the maintenance of intracellular pH homeostasis in retinal pigment epithelium (RPE cells). The sequence is that of Sodium/hydrogen exchanger 8 (Slc9a8) from Rattus norvegicus (Rat).